We begin with the raw amino-acid sequence, 298 residues long: 4-hydroxybenzoate octaprenyltransferase (298 aa).

Transmembrane regions (helical) follow at residues 30–50, 54–74, 105–125, 148–168, 218–238, 240–260, and 275–295; these read IGTW…AEGI, GTLL…CVVN, VLFA…NLPT, FPQV…FMAI, DRLM…WVGL, LALG…FVFQ, and AFLN…LSLW.

This sequence belongs to the UbiA prenyltransferase family. Requires Mg(2+) as cofactor.

The protein localises to the cell inner membrane. The catalysed reaction is all-trans-octaprenyl diphosphate + 4-hydroxybenzoate = 4-hydroxy-3-(all-trans-octaprenyl)benzoate + diphosphate. Its pathway is cofactor biosynthesis; ubiquinone biosynthesis. Catalyzes the prenylation of para-hydroxybenzoate (PHB) with an all-trans polyprenyl group. Mediates the second step in the final reaction sequence of ubiquinone-8 (UQ-8) biosynthesis, which is the condensation of the polyisoprenoid side chain with PHB, generating the first membrane-bound Q intermediate 3-octaprenyl-4-hydroxybenzoate. In Chromohalobacter salexigens (strain ATCC BAA-138 / DSM 3043 / CIP 106854 / NCIMB 13768 / 1H11), this protein is 4-hydroxybenzoate octaprenyltransferase.